A 574-amino-acid polypeptide reads, in one-letter code: Cocaine esterase (574 aa).

The segment at 1–144 is 1A; sequence MVDGNYSVAS…KAIAPSMASA (144 aa). Y44 is a substrate binding site. Catalysis depends on S117, which acts as the Acyl-ester intermediate. A substrate-binding site is contributed by Y118. The interval 145–240 is 2; it reads DLYRAPWYGP…NDESWQSISL (96 aa). The segment at 241-354 is 1B; sequence FERLGGLATP…WRDETDWPLP (114 aa). Catalysis depends on charge relay system residues D259 and H287. Residues 355–574 are 3; sequence DTAYTPFYLG…SHIVLPIIKR (220 aa).

Belongs to the CocE/NonD hydrolase family. In terms of assembly, homodimer. The protein aggregates upon heat inactivation.

It is found in the cytoplasm. It carries out the reaction cocaine + H2O = ecgonine methyl ester + benzoate + H(+). It functions in the pathway alkaloid degradation; cocaine degradation. Its function is as follows. Hydrolyzes cocaine to benzoate and ecgonine methyl ester, endowing the bacteria with the ability to utilize cocaine as a sole source of carbon and energy for growth, as this bacterium lives in the rhizosphere of coca plants. Also efficiently hydrolyzes cocaethylene, a more potent cocaine metabolite that has been observed in patients who concurrently abuse cocaine and alcohol. Is able to prevent cocaine-induced convulsions and lethality in rat. The protein is Cocaine esterase (cocE) of Rhodococcus sp. (strain MB1 Bresler).